We begin with the raw amino-acid sequence, 438 residues long: Transposon Ty2-LR2 Gag polyprotein (438 aa).

3 stretches are compositionally biased toward polar residues: residues 1–11, 19–39, and 49–60; these read MESQQLHQNPH, ASVT…SASN, and KVNSQEETTPGT. Disordered stretches follow at residues 1-88, 364-397, and 418-438; these read MESQ…YQQH, KNVS…AKAH, and VSSQ…TERI. Residues 295 to 397 form an RNA-binding region; it reads ENNINVSDRL…SSKPRAAKAH (103 aa). A compositionally biased stretch (low complexity) spans 369-381; that stretch reads TSPNTTNTKVTTR.

Homotrimer.

The protein localises to the cytoplasm. Functionally, capsid protein (CA) is the structural component of the virus-like particle (VLP), forming the shell that encapsulates the retrotransposons dimeric RNA genome. The particles are assembled from trimer-clustered units and there are holes in the capsid shells that allow for the diffusion of macromolecules. CA also has nucleocapsid-like chaperone activity, promoting primer tRNA(i)-Met annealing to the multipartite primer-binding site (PBS), dimerization of Ty2 RNA and initiation of reverse transcription. The chain is Transposon Ty2-LR2 Gag polyprotein (TY2A-LR2) from Saccharomyces cerevisiae (strain ATCC 204508 / S288c) (Baker's yeast).